Consider the following 288-residue polypeptide: Polyamine aminopropyltransferase (288 aa).

The region spanning 11–245 (IEWYPRGYGV…SPWSFLVGVK (235 aa)) is the PABS domain. Q36 is a binding site for S-methyl-5'-thioadenosine. Spermidine contacts are provided by H67 and D91. S-methyl-5'-thioadenosine is bound by residues E111 and 148 to 149 (DG). D166 (proton acceptor) is an active-site residue. A spermidine-binding site is contributed by 166–169 (DSTD). S-methyl-5'-thioadenosine is bound at residue P173.

The protein belongs to the spermidine/spermine synthase family. As to quaternary structure, homodimer or homotetramer.

The protein localises to the cytoplasm. It carries out the reaction S-adenosyl 3-(methylsulfanyl)propylamine + agmatine = N(1)-(3-aminopropyl)agmatine + S-methyl-5'-thioadenosine + H(+). The enzyme catalyses S-adenosyl 3-(methylsulfanyl)propylamine + putrescine = S-methyl-5'-thioadenosine + spermidine + H(+). It catalyses the reaction cadaverine + S-adenosyl 3-(methylsulfanyl)propylamine = aminopropylcadaverine + S-methyl-5'-thioadenosine + H(+). It functions in the pathway amine and polyamine biosynthesis; spermidine biosynthesis; spermidine from putrescine: step 1/1. In terms of biological role, involved in the biosynthesis of polyamines which are thought to support the growth of thermophilic microorganisms under high-temperature conditions. It seems that long-chain and branched-chain of polyamines effectively stabilize DNA and RNA, respectively. Catalyzes the irreversible transfer of a propylamine group from the amino donor S-adenosylmethioninamine (decarboxy-AdoMet) to agmatine to yield N1-aminopropylagmatine. It can also use cadaverine (1,5-diaminopentane) and putrescine (1,4-diaminobutane) as substrate with a lower activity than that of agmatine. The reaction involves a nucleophilic attack on the C-3 methylene of the propylamine moiety adjacent to the positively charged sulfur of decarboxy-AdoMet. This chain is Polyamine aminopropyltransferase, found in Thermococcus kodakarensis (strain ATCC BAA-918 / JCM 12380 / KOD1) (Pyrococcus kodakaraensis (strain KOD1)).